A 244-amino-acid polypeptide reads, in one-letter code: Phosphoadenosine 5'-phosphosulfate reductase (244 aa).

C239 functions as the Nucleophile; cysteine thiosulfonate intermediate in the catalytic mechanism.

Belongs to the PAPS reductase family. CysH subfamily.

Its subcellular location is the cytoplasm. The catalysed reaction is [thioredoxin]-disulfide + sulfite + adenosine 3',5'-bisphosphate + 2 H(+) = [thioredoxin]-dithiol + 3'-phosphoadenylyl sulfate. It participates in sulfur metabolism; hydrogen sulfide biosynthesis; sulfite from sulfate: step 3/3. Functionally, catalyzes the formation of sulfite from phosphoadenosine 5'-phosphosulfate (PAPS) using thioredoxin as an electron donor. The protein is Phosphoadenosine 5'-phosphosulfate reductase of Escherichia coli (strain K12 / MC4100 / BW2952).